The following is a 150-amino-acid chain: Viral late gene transcription factor 2 (150 aa).

The protein belongs to the orthopoxvirus VLTF-2/OPG126 family. Interacts with the late transcription elongation factor VLTF-4/OPG110. Interacts with the late transcription factors VLTF-1/OPG093.

In terms of biological role, acts with RNA polymerase to initiate transcription from late gene promoters. The chain is Viral late gene transcription factor 2 (OPG126) from Monkeypox virus.